The sequence spans 361 residues: MSGNGGAATTAEENGSMMRVIRVGTRKSQLARIQTDTVVAMLKTLYPGIQFEIIAMSTTGDKILDTALSKIGEKSLFTKELENALEKNEVDLVVHSLKDVPTILPPGFTIGAICKRENPCDAVVFHPKFIGKTLETLPEKSAVGTSSLRRVAQLQRKFPHLEFKSIRGNLNTRLRKLDEQLEFSAIILAVAGLQRMGWQNRVGQILHPEECMYAVGQGALAVEVRAKDQDILDLVGVLHDPETLLRCIAERAFLRHLEGGCSVPVAVHTVMKDGQLYLTGGVWSLDGSDSMQETMQATIQVPVQQEDGPEDDPQLVGITARNIPRGAQLAAENLGISLASLLLNKGAKNILDVARQLNDVR.

Residue S2 is modified to N-acetylserine. S69 carries the post-translational modification Phosphoserine. The residue at position 74 (K74) is an N6-acetyllysine. At S147 the chain carries Phosphoserine. An S-(dipyrrolylmethanemethyl)cysteine modification is found at C261.

It belongs to the HMBS family. Monomer. It depends on dipyrromethane as a cofactor.

The protein resides in the cytoplasm. It localises to the cytosol. The enzyme catalyses 4 porphobilinogen + H2O = hydroxymethylbilane + 4 NH4(+). It functions in the pathway porphyrin-containing compound metabolism; protoporphyrin-IX biosynthesis; coproporphyrinogen-III from 5-aminolevulinate: step 2/4. Functionally, as part of the heme biosynthetic pathway, catalyzes the sequential polymerization of four molecules of porphobilinogen to form hydroxymethylbilane, also known as preuroporphyrinogen. Catalysis begins with the assembly of the dipyrromethane cofactor by the apoenzyme from two molecules of porphobilinogen or from preuroporphyrinogen. The covalently linked cofactor acts as a primer, around which the tetrapyrrole product is assembled. In the last step of catalysis, the product, preuroporphyrinogen, is released, leaving the cofactor bound to the holodeaminase intact. This Rattus norvegicus (Rat) protein is Porphobilinogen deaminase (Hmbs).